We begin with the raw amino-acid sequence, 188 residues long: Adenine phosphoribosyltransferase (188 aa).

This sequence belongs to the purine/pyrimidine phosphoribosyltransferase family. Homodimer.

The protein localises to the cytoplasm. It catalyses the reaction AMP + diphosphate = 5-phospho-alpha-D-ribose 1-diphosphate + adenine. Its pathway is purine metabolism; AMP biosynthesis via salvage pathway; AMP from adenine: step 1/1. Catalyzes a salvage reaction resulting in the formation of AMP, that is energically less costly than de novo synthesis. The chain is Adenine phosphoribosyltransferase from Burkholderia thailandensis (strain ATCC 700388 / DSM 13276 / CCUG 48851 / CIP 106301 / E264).